A 184-amino-acid chain; its full sequence is MKNVTDSFVSLVHWPSAGSFGFNTDILATNPINLSVVLGVLIFFGKGVLSDLLDNRKQRILNTIRNSEELREGAIEQLEKARARLQDVQIEAEGYRAYGYFGIDEQRHESINSTYKTLEQLENNKNESIHFEQQRAINQVRQQIFQQALQGALGTLNSCLNNELHLRTISANIVLFGSMKELTD.

A helical transmembrane segment spans residues 27 to 49 (LATNPINLSVVLGVLIFFGKGVL).

This sequence belongs to the ATPase B chain family. As to quaternary structure, F-type ATPases have 2 components, F(1) - the catalytic core - and F(0) - the membrane proton channel. F(1) has five subunits: alpha(3), beta(3), gamma(1), delta(1), epsilon(1). F(0) has four main subunits: a(1), b(1), b'(1) and c(10-14). The alpha and beta chains form an alternating ring which encloses part of the gamma chain. F(1) is attached to F(0) by a central stalk formed by the gamma and epsilon chains, while a peripheral stalk is formed by the delta, b and b' chains.

It is found in the plastid. It localises to the chloroplast thylakoid membrane. Its function is as follows. F(1)F(0) ATP synthase produces ATP from ADP in the presence of a proton or sodium gradient. F-type ATPases consist of two structural domains, F(1) containing the extramembraneous catalytic core and F(0) containing the membrane proton channel, linked together by a central stalk and a peripheral stalk. During catalysis, ATP synthesis in the catalytic domain of F(1) is coupled via a rotary mechanism of the central stalk subunits to proton translocation. Functionally, component of the F(0) channel, it forms part of the peripheral stalk, linking F(1) to F(0). The sequence is that of ATP synthase subunit b, chloroplastic from Oenothera argillicola (Appalachian evening primrose).